A 123-amino-acid chain; its full sequence is UPF0738 protein BCG9842_B4089 (123 aa).

It belongs to the UPF0738 family.

The chain is UPF0738 protein BCG9842_B4089 from Bacillus cereus (strain G9842).